A 314-amino-acid chain; its full sequence is 1D-myo-inositol 2-acetamido-2-deoxy-alpha-D-glucopyranoside deacetylase 2 (314 aa).

Zn(2+)-binding residues include His25, Asp28, and His161.

The protein belongs to the MshB deacetylase family. It depends on Zn(2+) as a cofactor.

It catalyses the reaction 1D-myo-inositol 2-acetamido-2-deoxy-alpha-D-glucopyranoside + H2O = 1D-myo-inositol 2-amino-2-deoxy-alpha-D-glucopyranoside + acetate. Its function is as follows. Catalyzes the deacetylation of 1D-myo-inositol 2-acetamido-2-deoxy-alpha-D-glucopyranoside (GlcNAc-Ins) in the mycothiol biosynthesis pathway. This is 1D-myo-inositol 2-acetamido-2-deoxy-alpha-D-glucopyranoside deacetylase 2 from Frankia casuarinae (strain DSM 45818 / CECT 9043 / HFP020203 / CcI3).